A 189-amino-acid polypeptide reads, in one-letter code: Auxin-induced protein IAA4 (189 aa).

The EAR-like (transcriptional repression) motif lies at 8-12 (LRLGL). The region spanning 92–179 (GIFVKVSMDG…SCKRLRIMKG (88 aa)) is the PB1 domain.

It belongs to the Aux/IAA family. Homodimers and heterodimers. Post-translationally, phosphorylated by phytochrome A in vitro.

The protein resides in the nucleus. In terms of biological role, aux/IAA proteins are short-lived transcriptional factors that function as repressors of early auxin response genes at low auxin concentrations. Repression is thought to result from the interaction with auxin response factors (ARFs), proteins that bind to the auxin-responsive promoter element (AuxRE). Formation of heterodimers with ARF proteins may alter their ability to modulate early auxin response genes expression. The sequence is that of Auxin-induced protein IAA4 (IAA4/5) from Pisum sativum (Garden pea).